Here is a 689-residue protein sequence, read N- to C-terminus: Elongation factor G (689 aa).

Positions 8–282 constitute a tr-type G domain; sequence KKTRNIGIMA…AVIDYLPSPV (275 aa). Residues 17 to 24, 81 to 85, and 135 to 138 each bind GTP; these read AHIDAGKT, DTPGH, and NKMD.

Belongs to the TRAFAC class translation factor GTPase superfamily. Classic translation factor GTPase family. EF-G/EF-2 subfamily.

It localises to the cytoplasm. Catalyzes the GTP-dependent ribosomal translocation step during translation elongation. During this step, the ribosome changes from the pre-translocational (PRE) to the post-translocational (POST) state as the newly formed A-site-bound peptidyl-tRNA and P-site-bound deacylated tRNA move to the P and E sites, respectively. Catalyzes the coordinated movement of the two tRNA molecules, the mRNA and conformational changes in the ribosome. This is Elongation factor G from Halothermothrix orenii (strain H 168 / OCM 544 / DSM 9562).